The sequence spans 553 residues: Phosphomethylpyrimidine synthase (553 aa).

Residues Asn192, Met221, Tyr250, His286, 306–308 (SRG), 347–350 (DGLR), and Glu386 each bind substrate. His390 contributes to the Zn(2+) binding site. Tyr413 contributes to the substrate binding site. His454 contributes to the Zn(2+) binding site. 3 residues coordinate [4Fe-4S] cluster: Cys534, Cys537, and Cys542.

This sequence belongs to the ThiC family. As to quaternary structure, homodimer. [4Fe-4S] cluster is required as a cofactor.

The catalysed reaction is 5-amino-1-(5-phospho-beta-D-ribosyl)imidazole + S-adenosyl-L-methionine = 4-amino-2-methyl-5-(phosphooxymethyl)pyrimidine + CO + 5'-deoxyadenosine + formate + L-methionine + 3 H(+). Its pathway is cofactor biosynthesis; thiamine diphosphate biosynthesis. Its function is as follows. Catalyzes the synthesis of the hydroxymethylpyrimidine phosphate (HMP-P) moiety of thiamine from aminoimidazole ribotide (AIR) in a radical S-adenosyl-L-methionine (SAM)-dependent reaction. This chain is Phosphomethylpyrimidine synthase, found in Anaplasma marginale (strain St. Maries).